A 333-amino-acid polypeptide reads, in one-letter code: 4-hydroxyproline 2-epimerase (333 aa).

Cysteine 91 (proton acceptor) is an active-site residue. Substrate-binding positions include 92-93, histidine 225, and aspartate 250; that span reads GH. Cysteine 254 acts as the Proton donor in catalysis. Residue 255-256 participates in substrate binding; sequence GT.

This sequence belongs to the proline racemase family.

It carries out the reaction trans-4-hydroxy-L-proline = cis-4-hydroxy-D-proline. Its function is as follows. Catalyzes the epimerization of trans-4-hydroxy-L-proline (t4LHyp) to cis-4-hydroxy-D-proline (c4DHyp). Is likely involved in a degradation pathway that converts t4LHyp to alpha-ketoglutarate. Displays no proline racemase activity. This is 4-hydroxyproline 2-epimerase from Streptosporangium roseum (strain ATCC 12428 / DSM 43021 / JCM 3005 / KCTC 9067 / NCIMB 10171 / NRRL 2505 / NI 9100).